Consider the following 298-residue polypeptide: GTPase Era (298 aa).

Residues 8–176 form the Era-type G domain; sequence RSGSVAVIGR…VSDLLKLVPE (169 aa). The G1 stretch occupies residues 16 to 23; the sequence is GRPNVGKS. Residue 16–23 participates in GTP binding; that stretch reads GRPNVGKS. The G2 stretch occupies residues 42-46; it reads QTTRH. The segment at 63-66 is G3; the sequence is DTPG. GTP is bound by residues 63–67 and 125–128; these read DTPGL and NKVD. A G4 region spans residues 125-128; that stretch reads NKVD. The segment at 155–157 is G5; sequence VSA. One can recognise a KH type-2 domain in the interval 199-283; that stretch reads VREQLMRQLG…FLETWVRVRE (85 aa).

This sequence belongs to the TRAFAC class TrmE-Era-EngA-EngB-Septin-like GTPase superfamily. Era GTPase family. Monomer.

It is found in the cytoplasm. It localises to the cell inner membrane. Its function is as follows. An essential GTPase that binds both GDP and GTP, with rapid nucleotide exchange. Plays a role in 16S rRNA processing and 30S ribosomal subunit biogenesis and possibly also in cell cycle regulation and energy metabolism. This Xanthomonas campestris pv. campestris (strain 8004) protein is GTPase Era.